The sequence spans 202 residues: Probable chemoreceptor glutamine deamidase CheD (202 aa).

It belongs to the CheD family.

It catalyses the reaction L-glutaminyl-[protein] + H2O = L-glutamyl-[protein] + NH4(+). Its function is as follows. Probably deamidates glutamine residues to glutamate on methyl-accepting chemotaxis receptors (MCPs), playing an important role in chemotaxis. This Thiobacillus denitrificans (strain ATCC 25259 / T1) protein is Probable chemoreceptor glutamine deamidase CheD.